The following is a 1812-amino-acid chain: Putative surface cell antigen sca2 (1812 aa).

The signal sequence occupies residues 1 to 17 (MSTCLLTSSFLSTSARA). 2 stretches are compositionally biased toward polar residues: residues 344-357 (FLNN…STGR) and 371-382 (MSNQSIHNTGTS). 3 disordered regions span residues 344–382 (FLNN…TGTS), 648–691 (LEQT…QGFS), and 1338–1462 (KQEN…KKDV). Positions 656 to 685 (PNPPPLPLNGGIPNPPPLPLNGSMPPPPPL) are enriched in pro residues. 2 stretches are compositionally biased toward basic and acidic residues: residues 1349 to 1367 (STKD…EQSD) and 1382 to 1393 (SKNDKSSDDKKS). Residues 1401-1416 (DEDDTGYATDEEELEE) show a composition bias toward acidic residues. A compositionally biased stretch (low complexity) spans 1417-1455 (SNSTTNEELEESNSTTNEELEESNSTTNEELEESNSTTN). The 280-residue stretch at 1533–1812 (ETSINRGVWI…QGLIKLKVNL (280 aa)) folds into the Autotransporter domain.

Its subcellular location is the cell outer membrane. This Rickettsia sibirica (strain ATCC VR-151 / 246) protein is Putative surface cell antigen sca2 (sca2).